Here is a 479-residue protein sequence, read N- to C-terminus: Poly(A) polymerase catalytic subunit (479 aa).

Residues aspartate 202 and aspartate 204 contribute to the active site. Ca(2+)-binding residues include aspartate 202, aspartate 204, and aspartate 253.

It belongs to the poxviridae poly(A) polymerase catalytic subunit family. As to quaternary structure, heterodimer of a large (catalytic) subunit and a small (regulatory) subunit.

The catalysed reaction is RNA(n) + ATP = RNA(n)-3'-adenine ribonucleotide + diphosphate. Its function is as follows. Polymerase that creates the 3'-poly(A) tail of mRNA's. The sequence is that of Poly(A) polymerase catalytic subunit (OPG063) from Homo sapiens (Human).